A 204-amino-acid polypeptide reads, in one-letter code: Outer-membrane lipoprotein LolB (204 aa).

A signal peptide spans 1-20 (MLRSRRLALLCLATPLWLAA). Cys-21 is lipidated: N-palmitoyl cysteine. A lipid anchor (S-diacylglycerol cysteine) is attached at Cys-21. Positions 131 to 150 (GRAAPGTPSNVTRDANGRPD) are disordered.

It belongs to the LolB family. As to quaternary structure, monomer.

It localises to the cell outer membrane. Its function is as follows. Plays a critical role in the incorporation of lipoproteins in the outer membrane after they are released by the LolA protein. The sequence is that of Outer-membrane lipoprotein LolB from Cupriavidus metallidurans (strain ATCC 43123 / DSM 2839 / NBRC 102507 / CH34) (Ralstonia metallidurans).